We begin with the raw amino-acid sequence, 330 residues long: ATP-dependent (S)-NAD(P)H-hydrate dehydratase (330 aa).

The region spanning 36-327 (VIPLVRNTIP…QEINSAFKKL (292 aa)) is the YjeF C-terminal domain. Residues glycine 136 and 189 to 195 (NFMEFTR) each bind (6S)-NADPHX. ATP-binding positions include 229–233 (KGEED) and 248–257 (GSGRRCGGQG). Residue aspartate 258 participates in (6S)-NADPHX binding.

The protein belongs to the NnrD/CARKD family. Mg(2+) serves as cofactor.

The catalysed reaction is (6S)-NADHX + ATP = ADP + phosphate + NADH + H(+). It carries out the reaction (6S)-NADPHX + ATP = ADP + phosphate + NADPH + H(+). Functionally, catalyzes the dehydration of the S-form of NAD(P)HX at the expense of ATP, which is converted to ADP. Together with NAD(P)HX epimerase, which catalyzes the epimerization of the S- and R-forms, the enzyme allows the repair of both epimers of NAD(P)HX, a damaged form of NAD(P)H that is a result of enzymatic or heat-dependent hydration. This Danio rerio (Zebrafish) protein is ATP-dependent (S)-NAD(P)H-hydrate dehydratase.